Consider the following 102-residue polypeptide: Small ribosomal subunit protein uS10 (102 aa).

It belongs to the universal ribosomal protein uS10 family. Part of the 30S ribosomal subunit.

Involved in the binding of tRNA to the ribosomes. The protein is Small ribosomal subunit protein uS10 of Pyrococcus abyssi (strain GE5 / Orsay).